A 133-amino-acid polypeptide reads, in one-letter code: Small ribosomal subunit protein uS11 (133 aa).

The protein belongs to the universal ribosomal protein uS11 family. In terms of assembly, part of the 30S ribosomal subunit. Interacts with proteins S7 and S18. Binds to IF-3.

Functionally, located on the platform of the 30S subunit, it bridges several disparate RNA helices of the 16S rRNA. Forms part of the Shine-Dalgarno cleft in the 70S ribosome. This Brevibacillus brevis (strain 47 / JCM 6285 / NBRC 100599) protein is Small ribosomal subunit protein uS11.